A 686-amino-acid chain; its full sequence is DNA topoisomerase 1 (686 aa).

The Toprim domain maps to 1–141 (MILIIAEKPN…KRMKFSALTK (141 aa)). Residues Glu7 and Asp107 each contribute to the Mg(2+) site. The Topo IA-type catalytic domain maps to 156-574 (NFGMANAGIA…EAKERLTKIL (419 aa)). Residues 196–201 (STGRVQ) are interaction with DNA. Tyr317 serves as the catalytic O-(5'-phospho-DNA)-tyrosine intermediate. The C4-type 1 zinc finger occupies 606–634 (CPKCGGDLIVKYNKKTGKRFVGCSNWPKC). The C4-type 2; atypical zinc-finger motif lies at 653 to 678 (CCNGAPVVIIREEDGREFEICLDINC).

Belongs to the type IA topoisomerase family. In terms of assembly, monomer. Requires Mg(2+) as cofactor.

It catalyses the reaction ATP-independent breakage of single-stranded DNA, followed by passage and rejoining.. In terms of biological role, releases the supercoiling and torsional tension of DNA, which is introduced during the DNA replication and transcription, by transiently cleaving and rejoining one strand of the DNA duplex. Introduces a single-strand break via transesterification at a target site in duplex DNA. The scissile phosphodiester is attacked by the catalytic tyrosine of the enzyme, resulting in the formation of a DNA-(5'-phosphotyrosyl)-enzyme intermediate and the expulsion of a 3'-OH DNA strand. The free DNA strand then undergoes passage around the unbroken strand, thus removing DNA supercoils. Finally, in the religation step, the DNA 3'-OH attacks the covalent intermediate to expel the active-site tyrosine and restore the DNA phosphodiester backbone. The sequence is that of DNA topoisomerase 1 from Pyrococcus horikoshii (strain ATCC 700860 / DSM 12428 / JCM 9974 / NBRC 100139 / OT-3).